A 397-amino-acid chain; its full sequence is 1-deoxy-D-xylulose 5-phosphate reductoisomerase (397 aa).

Positions 17, 18, 19, 20, 47, and 130 each coordinate NADPH. Lysine 131 lines the 1-deoxy-D-xylulose 5-phosphate pocket. Residue glutamate 132 coordinates NADPH. Mn(2+) is bound at residue aspartate 156. Residues serine 157, glutamate 158, serine 182, and histidine 205 each contribute to the 1-deoxy-D-xylulose 5-phosphate site. Mn(2+) is bound at residue glutamate 158. Glycine 211 contributes to the NADPH binding site. 1-deoxy-D-xylulose 5-phosphate is bound by residues serine 218, asparagine 223, lysine 224, and glutamate 227. Glutamate 227 contacts Mn(2+).

Belongs to the DXR family. Mg(2+) is required as a cofactor. The cofactor is Mn(2+).

It carries out the reaction 2-C-methyl-D-erythritol 4-phosphate + NADP(+) = 1-deoxy-D-xylulose 5-phosphate + NADPH + H(+). The protein operates within isoprenoid biosynthesis; isopentenyl diphosphate biosynthesis via DXP pathway; isopentenyl diphosphate from 1-deoxy-D-xylulose 5-phosphate: step 1/6. Functionally, catalyzes the NADPH-dependent rearrangement and reduction of 1-deoxy-D-xylulose-5-phosphate (DXP) to 2-C-methyl-D-erythritol 4-phosphate (MEP). The chain is 1-deoxy-D-xylulose 5-phosphate reductoisomerase from Rhizobium rhizogenes (strain K84 / ATCC BAA-868) (Agrobacterium radiobacter).